Reading from the N-terminus, the 428-residue chain is Enolase (428 aa).

Residue glutamine 163 coordinates (2R)-2-phosphoglycerate. Glutamate 205 (proton donor) is an active-site residue. Aspartate 242, glutamate 285, and aspartate 312 together coordinate Mg(2+). The (2R)-2-phosphoglycerate site is built by lysine 337, arginine 366, serine 367, and lysine 388. Lysine 337 serves as the catalytic Proton acceptor.

The protein belongs to the enolase family. Mg(2+) is required as a cofactor.

The protein resides in the cytoplasm. Its subcellular location is the secreted. The protein localises to the cell surface. The enzyme catalyses (2R)-2-phosphoglycerate = phosphoenolpyruvate + H2O. The protein operates within carbohydrate degradation; glycolysis; pyruvate from D-glyceraldehyde 3-phosphate: step 4/5. Catalyzes the reversible conversion of 2-phosphoglycerate (2-PG) into phosphoenolpyruvate (PEP). It is essential for the degradation of carbohydrates via glycolysis. The chain is Enolase from Polynucleobacter asymbioticus (strain DSM 18221 / CIP 109841 / QLW-P1DMWA-1) (Polynucleobacter necessarius subsp. asymbioticus).